A 926-amino-acid chain; its full sequence is Peripheral plasma membrane protein CASK (926 aa).

The Protein kinase domain occupies 12-276 (YELCEVIGKG…VYEALNHPWL (265 aa)). ATP-binding positions include 18-26 (IGKGPFSVV) and K41. The residue at position 51 (S51) is a Phosphoserine. D141 is a catalytic residue. S151 and S155 each carry phosphoserine; by autocatalysis. T182 is modified (phosphothreonine). The tract at residues 305–315 (KGAVLAAVSSH) is calmodulin-binding. At S313 the chain carries Phosphoserine. L27 domains lie at 343–398 (AERA…SPQI) and 402–455 (PSDA…YSDE). The interval 482 to 909 (MENVTRVRLV…DETIRHLEEA (428 aa)) is required for interaction with NRXN1 (via C-terminal tail). The region spanning 490–571 (LVQFQKNTDE…SITFKIVPSY (82 aa)) is the PDZ domain. 2 positions are modified to phosphoserine: S570 and Y571. The disordered stretch occupies residues 574-610 (QSSSCERDSPSTSRQSPANGHSSTNNSVSDLPSTTQP). Residues 612 to 682 (GRQIYVRAQF…PSPELQEWRV (71 aa)) enclose the SH3 domain. One can recognise a Guanylate kinase-like domain in the interval 739–911 (RKTLVLLGAH…TIRHLEEAVE (173 aa)).

The protein in the N-terminal section; belongs to the protein kinase superfamily. CAMK Ser/Thr protein kinase family. CaMK subfamily. This sequence belongs to the MAGUK family. As to quaternary structure, CASK and LIN7 form a tripartite complex with CASKIN1. Component of the brain-specific heterotrimeric complex (LIN-10-LIN-2-LIN-7 complex) composed of at least APBA1, CASK, and LIN7, which associates with the motor protein KIF17 to transport vesicles along microtubules. Forms a heterotrimeric complex with DLG1 and LIN7B via their L27 domains. Identified in a complex with ACTN4, IQGAP1, MAGI2, NPHS1, SPTAN1 and SPTBN1. Part of a complex containing CASK, TBR1 and TSPYL2. Interacts with WHRN. Interacts (via the PDZ, SH3 and guanylate kinase-like domains) with NRXN1 (via C-terminus). Interacts with CASKIN1, APBA1, LIN7(A/B/C), and L27 domain of DLG1 and isoform 2 of DLG4. Interacts with FCHSD2. Interacts with KIRREL3. Interacts with TBR1. Interacts with TSPYL2. Unlike other protein kinases, does not require a divalent cation such as magnesium for catalytic activity. is required as a cofactor.

It localises to the nucleus. The protein localises to the cytoplasm. It is found in the cell membrane. The enzyme catalyses L-seryl-[protein] + ATP = O-phospho-L-seryl-[protein] + ADP + H(+). It catalyses the reaction L-threonyl-[protein] + ATP = O-phospho-L-threonyl-[protein] + ADP + H(+). With respect to regulation, differs from archetypal CaMK members in that the kinase domain exhibits a constitutively active conformation and the autoinhibitory region does not engage in direct contact with the ATP-binding cleft, although it still binds Ca(2+)/CAM. In terms of biological role, multidomain scaffolding Mg(2+)-independent protein kinase that catalyzes the phosphotransfer from ATP to proteins such as NRXN1, and plays a role in synaptic transmembrane protein anchoring and ion channel trafficking. Contributes to neural development and regulation of gene expression via interaction with the transcription factor TBR1. Binds to cell-surface proteins, including amyloid precursor protein, neurexins, and syndecans. May mediate a link between the extracellular matrix and the actin cytoskeleton via its interaction with syndecan and with the actin/spectrin-binding protein 4.1. Component of the LIN-10-LIN-2-LIN-7 complex, which associates with the motor protein KIF17 to transport vesicles containing N-methyl-D-aspartate (NMDA) receptor subunit NR2B along microtubules. The protein is Peripheral plasma membrane protein CASK of Mus musculus (Mouse).